We begin with the raw amino-acid sequence, 1407 residues long: DNA-directed RNA polymerase subunit beta' (1407 aa).

Zn(2+) contacts are provided by C70, C72, C85, and C88. Mg(2+) is bound by residues D460, D462, and D464. Zn(2+) is bound by residues C814, C888, C895, and C898.

This sequence belongs to the RNA polymerase beta' chain family. As to quaternary structure, the RNAP catalytic core consists of 2 alpha, 1 beta, 1 beta' and 1 omega subunit. When a sigma factor is associated with the core the holoenzyme is formed, which can initiate transcription. The cofactor is Mg(2+). It depends on Zn(2+) as a cofactor.

It catalyses the reaction RNA(n) + a ribonucleoside 5'-triphosphate = RNA(n+1) + diphosphate. Its function is as follows. DNA-dependent RNA polymerase catalyzes the transcription of DNA into RNA using the four ribonucleoside triphosphates as substrates. This chain is DNA-directed RNA polymerase subunit beta', found in Salmonella arizonae (strain ATCC BAA-731 / CDC346-86 / RSK2980).